The following is a 239-amino-acid chain: tRNA pseudouridine synthase C (239 aa).

Asp54 is an active-site residue.

This sequence belongs to the pseudouridine synthase RluA family.

It carries out the reaction uridine(65) in tRNA = pseudouridine(65) in tRNA. Functionally, responsible for synthesis of pseudouridine from uracil-65 in transfer RNAs. This chain is tRNA pseudouridine synthase C (truC), found in Haemophilus influenzae (strain ATCC 51907 / DSM 11121 / KW20 / Rd).